We begin with the raw amino-acid sequence, 396 residues long: Obg-like ATPase 1 (396 aa).

Positions 23-283 constitute an OBG-type G domain; that stretch reads LKIGIVGLPN…LSAEERQKYL (261 aa). 32–37 provides a ligand contact to ATP; sequence NVGKST. 2 residues coordinate Mg(2+): S36 and T56. L231 lines the ATP pocket. Positions 267–274 match the Nuclear export signal motif; sequence LELRLQEL. Position 294 is an N6-acetyllysine (K294). In terms of domain architecture, TGS spans 304–387; it reads QLEYFFTAGP…EDGDIIFFKF (84 aa).

Belongs to the TRAFAC class OBG-HflX-like GTPase superfamily. OBG GTPase family. YchF/OLA1 subfamily. Monomer. Requires Mg(2+) as cofactor.

It is found in the cytoplasm. The protein resides in the nucleus. Its subcellular location is the nucleolus. Its function is as follows. Hydrolyzes ATP, and can also hydrolyze GTP with lower efficiency. Has lower affinity for GTP. The chain is Obg-like ATPase 1 from Bos taurus (Bovine).